The following is a 643-amino-acid chain: U3 small nucleolar RNA-associated protein 5 (643 aa).

6 WD repeats span residues 14–54 (GQYL…LYLE), 55–98 (DSKL…VTYK), 186–225 (GHVS…TKCV), 227–266 (VAES…SSTK), 340–389 (SADR…LEQE), and 471–511 (RLKP…IHGG). Positions 565-643 (HSSEPVVEED…EAGYSDVEME (79 aa)) are disordered. Residues 570–611 (VVEEDEDDVEYNEELDDAGLIEDGEESYGSEEEEEGDSDNEE) are compositionally biased toward acidic residues. Residues 612-626 (EQKHTSSKQDGRLET) show a composition bias toward basic and acidic residues. Residues 627 to 643 (EQSDGEEEAGYSDVEME) are compositionally biased toward acidic residues.

Belongs to the UTP5 family. As to quaternary structure, interacts with snoRNA U3. Interacts with MPP10. Component of the ribosomal small subunit (SSU) processome composed of at least 40 protein subunits and snoRNA U3. In the absence of snoRNA3, forms a complex with other t-UTPs. This complex can associate with pre-18S ribosomal RNAs.

It localises to the nucleus. The protein resides in the nucleolus. Functionally, involved in nucleolar processing of pre-18S ribosomal RNA. Required for optimal pre-ribosomal RNA transcription by RNA polymerase I together with a subset of U3 proteins required for transcription (t-UTPs). The sequence is that of U3 small nucleolar RNA-associated protein 5 (UTP5) from Saccharomyces cerevisiae (strain ATCC 204508 / S288c) (Baker's yeast).